The chain runs to 367 residues: Trans-enoyl reductase ffsC (367 aa).

An NADP(+)-binding site is contributed by 55–58 (CDWK). 143 to 150 (TGIGTLGL) lines the substrate pocket. Residues 203-206 (SAKN), Tyr221, and 268-269 (LE) contribute to the NADP(+) site. Position 288 to 292 (288 to 292 (GMAIL)) interacts with substrate. Position 357–358 (357–358 (VS)) interacts with NADP(+).

This sequence belongs to the zinc-containing alcohol dehydrogenase family. Monomer.

The protein operates within mycotoxin biosynthesis. Functionally, trans-enoyl reductase; part of the gene cluster that mediates the biosynthesis of the cytotoxic leucine-containing cytochalasans, including aspochalasin C, aspochalasin E, TMC-169, flavichalasine F, aspergillin PZ, aspochalasin M and flavichalasine G. The first step in the pathway is catalyzed by the hybrid PKS-NRPS ffsA that utilizes 8 units of malonyl-CoA to iteratively assemble the octaketide chain before addition of L-leucine by the C-terminal NRPS modules. Because ffsA lacks a designated enoylreductase (ER) domain, the required activity is provided the enoyl reductase fssC. The methyltransferase (MT) domain of ffsA catalyzes the alpha-methylation at C10 and C14 using S-adenosyl-L-methionine as the methyl-donating cosubstrate. Reduction by the hydrolyase ffsE, followed by dehydration and intra-molecular Diels-Alder cyclization by the Diels-Alderase ffsF then yield the required isoindolone-fused macrocycle. A number of oxidative steps catalyzed by the tailoring cytochrome P450 monooxygenase ffsD, the FAD-linked oxidoreductase ffsJ and the short-chain dehydrogenase/reductase ffsI, are further required to afford the final products. The polypeptide is Trans-enoyl reductase ffsC (Aspergillus flavipes).